The sequence spans 331 residues: Ribosomal RNA small subunit methyltransferase H (331 aa).

S-adenosyl-L-methionine-binding positions include Gly49–His51, Asp68, Leu102, Asp116, and Gln123.

Belongs to the methyltransferase superfamily. RsmH family.

It is found in the cytoplasm. It carries out the reaction cytidine(1402) in 16S rRNA + S-adenosyl-L-methionine = N(4)-methylcytidine(1402) in 16S rRNA + S-adenosyl-L-homocysteine + H(+). In terms of biological role, specifically methylates the N4 position of cytidine in position 1402 (C1402) of 16S rRNA. The polypeptide is Ribosomal RNA small subunit methyltransferase H (Renibacterium salmoninarum (strain ATCC 33209 / DSM 20767 / JCM 11484 / NBRC 15589 / NCIMB 2235)).